We begin with the raw amino-acid sequence, 417 residues long: Synaptic vesicle membrane protein VAT-1 homolog-like (417 aa).

2 disordered regions span residues 1-33 and 382-417; these read MAKE…GSHR and PTPL…PFIQ. At serine 390 the chain carries Phosphoserine. Threonine 391 and threonine 393 each carry phosphothreonine. At serine 394 the chain carries Phosphoserine. Acidic residues predominate over residues 395 to 405; that stretch reads EAGEEEEDHEG. A compositionally biased stretch (basic and acidic residues) spans 406–417; sequence DSENKERMPFIQ.

This sequence belongs to the zinc-containing alcohol dehydrogenase family. Quinone oxidoreductase subfamily.

The protein is Synaptic vesicle membrane protein VAT-1 homolog-like (Vat1l) of Mus musculus (Mouse).